A 359-amino-acid polypeptide reads, in one-letter code: 4-galactosyl-N-acetylglucosaminide 3-alpha-L-fucosyltransferase 9 (359 aa).

Residues 1–11 (MTSASKGILRP) lie on the Cytoplasmic side of the membrane. A helical; Signal-anchor for type II membrane protein transmembrane segment spans residues 12 to 32 (FLIVCIILACSMVCLFIYIKP). Residues 33 to 359 (TNSWIFSPME…VGNLEKWFWN (327 aa)) lie on the Lumenal side of the membrane. Asparagine 62 carries N-linked (GlcNAc...) asparagine glycosylation. Residues 63 to 168 (ETTILIWVWP…RRDSDIQVPY (106 aa)) form an acceptor-binding region. Glutamine 75 is an a beta-D-galactosyl-(1-&gt;4)-N-acetyl-beta-D-glucosaminyl derivative binding site. 3 cysteine pairs are disulfide-bonded: cysteine 82-cysteine 335, cysteine 91-cysteine 338, and cysteine 190-cysteine 238. Asparagine 101 carries an N-linked (GlcNAc...) asparagine glycan. Glutamate 137 is a binding site for a beta-D-galactosyl-(1-&gt;4)-N-acetyl-beta-D-glucosaminyl derivative. The Nucleophile role is filled by glutamate 137. Residue glutamate 137 participates in GDP-beta-L-fucose binding. Asparagine 153 is a glycosylation site (N-linked (GlcNAc...) asparagine). The GDP-beta-L-fucose site is built by tyrosine 168, valine 192, serine 194, asparagine 195, arginine 202, valine 226, tyrosine 241, asparagine 246, tyrosine 252, glutamate 255, and lysine 256. Positions 169 to 326 (GFLTVSTNPF…NWRKDFTVNL (158 aa)) are donor-binding. Residues 327–359 (PRFWESHACLACDHVKRHQEYKSVGNLEKWFWN) form an acceptor-binding region.

The protein belongs to the glycosyltransferase 10 family. As to quaternary structure, homodimer. In terms of processing, N-glycosylated with complex-type N-glycans.

The protein localises to the golgi apparatus. It localises to the trans-Golgi network membrane. Its subcellular location is the golgi apparatus membrane. The enzyme catalyses a beta-D-galactosyl-(1-&gt;4)-N-acetyl-beta-D-glucosaminyl derivative + GDP-beta-L-fucose = a beta-D-galactosyl-(1-&gt;4)-[alpha-L-fucosyl-(1-&gt;3)]-N-acetyl-beta-D-glucosaminyl derivative + GDP + H(+). The catalysed reaction is an alpha-Neu5Ac-(2-&gt;3)-beta-D-Gal-(1-&gt;4)-beta-D-GlcNAc-(1-&gt;3)-beta-D-Gal-(1-&gt;4)-beta-D-GlcNAc derivative + GDP-beta-L-fucose = an alpha-Neu5Ac-(2-&gt;3)-beta-D-Gal-(1-&gt;4)-beta-D-GlcNAc-(1-&gt;3)-beta-D-Gal-(1-&gt;4)-[alpha-L-Fuc-(1-&gt;3)]-beta-D-GlcNAc derivative + GDP + H(+). It catalyses the reaction alpha-N-glycoloylneuraminosyl-(2-&gt;3)-beta-D-galactosyl-(1-&gt;4)-N-acetyl-beta-D-glucosaminyl-(1-&gt;3)-beta-D-galactosyl-(1-&gt;4)-N-acetyl-beta-D-glucosaminyl-(1-&gt;3)-beta-D-galactosyl-(1-&gt;4)-beta-D-glucosyl-(1&lt;-&gt;1')-ceramide + GDP-beta-L-fucose = alpha-N-glycoloylneuraminosyl-(2-&gt;3)-beta-D-galactosyl-(1-&gt;4)-N-acetyl-beta-D-glucosaminyl-(1-&gt;3)-beta-D-galactosyl-(1-&gt;4)-[alpha-L-fucosyl-(1-&gt;3)]-N-acetyl-beta-D-glucosaminyl-(1-&gt;3)-beta-D-galactosyl-(1-&gt;4)-beta-D-glucosyl-(1&lt;-&gt;1')-ceramide + GDP + H(+). It carries out the reaction alpha-D-galactosyl-(1-&gt;3)-beta-D-galactosyl-(1-&gt;4)-N-acetyl-beta-D-glucosaminyl-(1-&gt;3)-beta-D-galactosyl-(1-&gt;4)-beta-D-glucosyl-(1&lt;-&gt;1')-ceramide + GDP-beta-L-fucose = a neolactoside IV(3)-alpha-Gal,III(3)-alpha-Fuc-nLc4Cer + GDP + H(+). The enzyme catalyses a neolactoside nLc4Cer + GDP-beta-L-fucose = a neolactoside III(3)-alpha-Fuc-nLc4Cer + GDP + H(+). The catalysed reaction is an N-acetyl-alpha-neuraminyl-(2-&gt;3)-beta-D-galactosyl-(1-&gt;4)-N-acetyl-beta-D-glucosaminyl derivative + GDP-beta-L-fucose = an alpha-Neu5Ac-(2-&gt;3)-beta-D-Gal-(1-&gt;4)-[alpha-L-Fuc-(1-&gt;3)]-beta-D-GlcNAc derivative + GDP + H(+). It catalyses the reaction beta-D-Gal-(1-&gt;4)-beta-D-GlcNAc-(1-&gt;3)-beta-D-Gal-(1-&gt;4)-D-Glc + GDP-beta-L-fucose = beta-D-Gal-(1-&gt;4)-[alpha-L-Fuc-(1-&gt;3)]-beta-D-GlcNAc-(1-&gt;3)-beta-D-Gal-(1-&gt;4)-D-Glc + GDP + H(+). It carries out the reaction an alpha-L-Fuc-(1-&gt;2)-beta-D-Gal-(1-&gt;4)-beta-D-GlcNAc derivative + GDP-beta-L-fucose = an alpha-L-Fuc-(1-&gt;2)-beta-D-Gal-(1-&gt;4)-[alpha-L-Fuc-(1-&gt;3)]-beta-D-GlcNAc derivative + GDP + H(+). It functions in the pathway protein modification; protein glycosylation. Its pathway is glycolipid biosynthesis. Its activity is regulated as follows. Activated by Mn2+. Catalyzes alpha(1-&gt;3) linkage of fucosyl moiety transferred from GDP-beta-L-fucose to N-acetyl glucosamine (GlcNAc) within type 2 lactosamine (LacNAc, beta-D-Gal-(1-&gt;4)-beta-D-GlcNAc-) glycan attached to glycolipids and N- or O-linked glycoproteins. Fucosylates distal type 2 LacNAc and its fucosylated (H-type 2 LacNAc) and sialylated (sialyl-type 2 LacNAc) derivatives to form Lewis x (Lex) (CD15) and Lewis y (Ley) antigenic epitopes involved in cell adhesion and differentiation. Generates Lex epitopes in the brain, presumably playing a role in the maintenance of neuronal stemness and neurite outgrowth in progenitor neural cells. Fucosylates the internal type 2 LacNAc unit of the polylactosamine chain to form VIM-2 antigen that serves as recognition epitope for SELE. Can also modify milk oligosaccharides in particular type 2 tetrasaccharide LNnT. This is 4-galactosyl-N-acetylglucosaminide 3-alpha-L-fucosyltransferase 9 from Bos taurus (Bovine).